We begin with the raw amino-acid sequence, 275 residues long: DNA-directed RNA polymerase subunit Rpo3 (275 aa).

It belongs to the archaeal Rpo3/eukaryotic RPB3 RNA polymerase subunit family. In terms of assembly, part of the RNA polymerase complex.

The protein localises to the cytoplasm. It catalyses the reaction RNA(n) + a ribonucleoside 5'-triphosphate = RNA(n+1) + diphosphate. Functionally, DNA-dependent RNA polymerase (RNAP) catalyzes the transcription of DNA into RNA using the four ribonucleoside triphosphates as substrates. The polypeptide is DNA-directed RNA polymerase subunit Rpo3 (Methanopyrus kandleri (strain AV19 / DSM 6324 / JCM 9639 / NBRC 100938)).